The following is a 309-amino-acid chain: Methionyl-tRNA formyltransferase (309 aa).

Residue 109–112 coordinates (6S)-5,6,7,8-tetrahydrofolate; that stretch reads SLLP.

The protein belongs to the Fmt family.

The enzyme catalyses L-methionyl-tRNA(fMet) + (6R)-10-formyltetrahydrofolate = N-formyl-L-methionyl-tRNA(fMet) + (6S)-5,6,7,8-tetrahydrofolate + H(+). Attaches a formyl group to the free amino group of methionyl-tRNA(fMet). The formyl group appears to play a dual role in the initiator identity of N-formylmethionyl-tRNA by promoting its recognition by IF2 and preventing the misappropriation of this tRNA by the elongation apparatus. The chain is Methionyl-tRNA formyltransferase from Clostridium perfringens (strain 13 / Type A).